Here is a 474-residue protein sequence, read N- to C-terminus: UDP-N-acetylmuramate--L-alanine ligase (474 aa).

ATP is bound at residue 108 to 114 (GTHGKTT).

The protein belongs to the MurCDEF family.

It localises to the cytoplasm. It catalyses the reaction UDP-N-acetyl-alpha-D-muramate + L-alanine + ATP = UDP-N-acetyl-alpha-D-muramoyl-L-alanine + ADP + phosphate + H(+). It functions in the pathway cell wall biogenesis; peptidoglycan biosynthesis. Functionally, cell wall formation. In Chloroflexus aggregans (strain MD-66 / DSM 9485), this protein is UDP-N-acetylmuramate--L-alanine ligase.